Here is a 65-residue protein sequence, read N- to C-terminus: Large ribosomal subunit protein bL35 (65 aa).

It belongs to the bacterial ribosomal protein bL35 family.

This Rhodospirillum rubrum (strain ATCC 11170 / ATH 1.1.1 / DSM 467 / LMG 4362 / NCIMB 8255 / S1) protein is Large ribosomal subunit protein bL35.